The following is a 417-amino-acid chain: NADH-quinone oxidoreductase subunit D (417 aa).

This sequence belongs to the complex I 49 kDa subunit family. NDH-1 is composed of 14 different subunits. Subunits NuoB, C, D, E, F, and G constitute the peripheral sector of the complex.

The protein resides in the cell inner membrane. It catalyses the reaction a quinone + NADH + 5 H(+)(in) = a quinol + NAD(+) + 4 H(+)(out). In terms of biological role, NDH-1 shuttles electrons from NADH, via FMN and iron-sulfur (Fe-S) centers, to quinones in the respiratory chain. The immediate electron acceptor for the enzyme in this species is believed to be ubiquinone. Couples the redox reaction to proton translocation (for every two electrons transferred, four hydrogen ions are translocated across the cytoplasmic membrane), and thus conserves the redox energy in a proton gradient. This chain is NADH-quinone oxidoreductase subunit D, found in Polynucleobacter necessarius subsp. necessarius (strain STIR1).